The following is an 874-amino-acid chain: Protein translocase subunit SecA (874 aa).

ATP is bound by residues Gln87, 105–109 (GEGKT), and Asp512. Positions 859, 861, 870, and 871 each coordinate Zn(2+).

The protein belongs to the SecA family. Monomer and homodimer. Part of the essential Sec protein translocation apparatus which comprises SecA, SecYEG and auxiliary proteins SecDF-YajC and YidC. The cofactor is Zn(2+).

It is found in the cell inner membrane. The protein resides in the cytoplasm. It carries out the reaction ATP + H2O + cellular proteinSide 1 = ADP + phosphate + cellular proteinSide 2.. Part of the Sec protein translocase complex. Interacts with the SecYEG preprotein conducting channel. Has a central role in coupling the hydrolysis of ATP to the transfer of proteins into and across the cell membrane, serving both as a receptor for the preprotein-SecB complex and as an ATP-driven molecular motor driving the stepwise translocation of polypeptide chains across the membrane. The chain is Protein translocase subunit SecA from Buchnera aphidicola subsp. Schizaphis graminum (strain Sg).